The primary structure comprises 166 residues: Vasopressin-neurophysin 2-copeptin (166 aa).

A signal peptide spans 1–19 (MPDATLPACFLSLLAFTSA). A disulfide bridge connects residues Cys-20 and Cys-25. Glycine amide is present on Gly-28. Disulfide bonds link Cys-41–Cys-85, Cys-44–Cys-58, Cys-52–Cys-75, Cys-59–Cys-65, Cys-92–Cys-104, Cys-98–Cys-116, and Cys-105–Cys-110. A glycan (N-linked (GlcNAc...) asparagine) is linked at Asn-133.

This sequence belongs to the vasopressin/oxytocin family. As to quaternary structure, interacts with vasopressin receptors V1bR/AVPR1B (Ki=85 pM), V1aR/AVPR1A (Ki=0.6 nM) and V2R/AVPR2 (Ki=4.9 nM). Interacts with oxytocin receptor (OXTR) (Ki=110 nM).

It is found in the secreted. Its function is as follows. Neurophysin 2 specifically binds vasopressin. Functionally, vasopressin has a direct antidiuretic action on the kidney, it also causes vasoconstriction of the peripheral vessels. Acts by binding to vasopressin receptors (V1bR/AVPR1B, V1aR/AVPR1A, and V2R/AVPR2). This is Vasopressin-neurophysin 2-copeptin (AVP) from Bos taurus (Bovine).